The following is a 130-amino-acid chain: Small ribosomal subunit protein uS9 (130 aa).

The protein belongs to the universal ribosomal protein uS9 family.

The protein is Small ribosomal subunit protein uS9 of Bordetella parapertussis (strain 12822 / ATCC BAA-587 / NCTC 13253).